Here is a 504-residue protein sequence, read N- to C-terminus: Maturase K (504 aa).

It belongs to the intron maturase 2 family. MatK subfamily.

It localises to the plastid. Its subcellular location is the chloroplast. Functionally, usually encoded in the trnK tRNA gene intron. Probably assists in splicing its own and other chloroplast group II introns. This is Maturase K from Chimaphila umbellata (Pipsissewa).